A 576-amino-acid polypeptide reads, in one-letter code: MAGUK p55 subfamily member 2 (576 aa).

2 L27 domains span residues 8 to 60 and 84 to 142; these read SETA…FMQQ and LEAV…YETP. S42 carries the post-translational modification Phosphoserine. T141 is subject to Phosphothreonine. S145 is subject to Phosphoserine. The PDZ domain maps to 185–240; the sequence is ELVIARILHGGMVAQQGLLHVGDIIKEVNGQPVGSDPRALQELLRNASGSVILKIL. The 69-residue stretch at 249–317 folds into the SH3 domain; that stretch reads PRQVFVKCHF…PSQLLEEKRK (69 aa). Residues 374 to 561 enclose the Guanylate kinase-like domain; sequence RKTLVLIGAQ…TFRELQTAME (188 aa).

The protein belongs to the MAGUK family. In terms of assembly, can homomultimerise. Interacts with CACNG2. Interacts (via the SH3-Guanylate kinase-like sub-module) with DLG4/PSD95 and DLGAP1/GKAP. Interacts (via the PDZ domain) with CADM1 (via C-terminus). Interacts with KCNN2/SK2 (via N-terminal domain). Interacts with SRC. Post-translationally, phosphorylated by SRC.

The protein resides in the cytoplasm. It is found in the cytoskeleton. It localises to the membrane. The protein localises to the cell projection. Its subcellular location is the dendrite. The protein resides in the postsynaptic density. Functionally, postsynaptic MAGUK scaffold protein that links CADM1 cell adhesion molecules to core components of the postsynaptic density. In CA1 pyramidal neurons, required for synaptic KCNN2-containing channel function and long-term potentiation expression. Seems to negatively regulate SRC function in epithelial cells. This chain is MAGUK p55 subfamily member 2, found in Homo sapiens (Human).